The primary structure comprises 427 residues: Probable purple acid phosphatase 20 (427 aa).

Positions 1–21 are cleaved as a signal peptide; that stretch reads MVKVLGLVAILLIVLAGNVLS. A glycan (N-linked (GlcNAc...) asparagine) is linked at Asn85. Residues Asp147, Asp174, and Tyr177 each coordinate Fe cation. Asp174 serves as a coordination point for Zn(2+). The Zn(2+) site is built by Asn207 and His291. Asn207 contacts substrate. His301 functions as the Proton donor in the catalytic mechanism. His330 is a binding site for Zn(2+). 330–332 is a substrate binding site; the sequence is HVH. A Fe cation-binding site is contributed by His332. Asn392 carries N-linked (GlcNAc...) asparagine glycosylation.

The protein belongs to the metallophosphoesterase superfamily. Purple acid phosphatase family. Homodimer. Fe cation serves as cofactor. Zn(2+) is required as a cofactor. In terms of tissue distribution, expressed flowers and siliques.

The protein localises to the secreted. The catalysed reaction is a phosphate monoester + H2O = an alcohol + phosphate. This is Probable purple acid phosphatase 20 (PAP20) from Arabidopsis thaliana (Mouse-ear cress).